The sequence spans 130 residues: Histidine triad nucleotide-binding protein 1 (130 aa).

One can recognise an HIT domain in the interval 22–130 (LFGKIIRKEI…GGRQLQWPPG (109 aa)). The Histidine triad motif signature appears at 114–118 (HLHLH).

The chain is Histidine triad nucleotide-binding protein 1 (hint-1) from Caenorhabditis elegans.